A 116-amino-acid chain; its full sequence is Large ribosomal subunit protein bL17 (116 aa).

This sequence belongs to the bacterial ribosomal protein bL17 family. Part of the 50S ribosomal subunit. Contacts protein L32.

The polypeptide is Large ribosomal subunit protein bL17 (Prochlorococcus marinus (strain MIT 9215)).